The chain runs to 311 residues: Dehydrogenase/reductase SDR family member 7C (311 aa).

Residues 1-18 form the signal peptide; sequence MGLMAVLMLPLLLLGISG. The NAD(+) site is built by S47, L49, Y191, K195, and S226. The active-site Proton acceptor is the Y191.

It belongs to the short-chain dehydrogenases/reductases (SDR) family. As to expression, expressed in skeletal muscle and cardiac muscle. Also expressed in liver, kidney, adipocytes and skin.

It localises to the sarcoplasmic reticulum membrane. It catalyses the reaction all-trans-retinol + NAD(+) = all-trans-retinal + NADH + H(+). Functionally, NADH-dependent oxidoreductase which catalyzes the oxidation of all-trans-retinol to all-trans-retinal. Plays a role in the regulation of cardiac and skeletal muscle metabolic functions. Maintains Ca(2+) intracellular homeostasis by repressing Ca(2+) release from the sarcoplasmic reticulum (SR) in myotubes, possibly through local alternations in NAD/NADH or retinol/retinal. Also plays a role in Ca(2+) homeostasis by controlling Ca(2+) overload in the cytosol and the SR in myotubes. Involved in glucose uptake into skeletal muscles and muscle performance by activating PI3K and mTORC2-mediated AKT1 phosphorylation signaling pathways, possibly through the action of its downstream catalytic product all-trans-retinoic acid. The polypeptide is Dehydrogenase/reductase SDR family member 7C (Mus musculus (Mouse)).